Consider the following 125-residue polypeptide: Protein ApaG (125 aa).

One can recognise an ApaG domain in the interval 1 to 125 (MINSPRVCVQ…FRLAIPSLIN (125 aa)).

The sequence is that of Protein ApaG from Sodalis glossinidius (strain morsitans).